The primary structure comprises 404 residues: Multidrug resistance protein MdtH (404 aa).

The Cytoplasmic segment spans residues Met-1–Lys-12. A helical transmembrane segment spans residues Tyr-13–Ile-33. Residues Ser-34–Glu-98 are Periplasmic-facing. A helical transmembrane segment spans residues Pro-99 to Phe-116. Topologically, residues Asp-117 to Ser-138 are cytoplasmic. The chain crosses the membrane as a helical span at residues Leu-139–Leu-159. Residues Gln-160–Arg-164 lie on the Periplasmic side of the membrane. A helical membrane pass occupies residues Leu-165 to Leu-185. Topologically, residues Pro-186–Tyr-213 are cytoplasmic. A helical transmembrane segment spans residues Val-214–Met-234. The Periplasmic portion of the chain corresponds to Val-235–Ala-243. Residues Ala-244–Ala-264 form a helical membrane-spanning segment. The Cytoplasmic portion of the chain corresponds to Arg-265–Arg-276. A helical transmembrane segment spans residues Leu-277–Leu-297. Over Gln-298–Gln-299 the chain is Periplasmic. The helical transmembrane segment at Leu-300–Thr-320 threads the bilayer. Residues Leu-321–Arg-339 are Cytoplasmic-facing. The chain crosses the membrane as a helical span at residues Leu-340–Gly-360. Over Lys-361–Glu-367 the chain is Periplasmic. Residues Leu-368 to Phe-388 traverse the membrane as a helical segment. The Cytoplasmic portion of the chain corresponds to Ser-389–Ile-404.

The protein belongs to the major facilitator superfamily. DHA1 family. MdtH (TC 2.A.1.2.21) subfamily.

It is found in the cell inner membrane. This chain is Multidrug resistance protein MdtH, found in Salmonella arizonae (strain ATCC BAA-731 / CDC346-86 / RSK2980).